The chain runs to 111 residues: 2Fe-2S ferredoxin (111 aa).

Positions Met1–Asn104 constitute a 2Fe-2S ferredoxin-type domain. Residues Cys42, Cys48, Cys51, and Cys87 each coordinate [2Fe-2S] cluster.

It belongs to the adrenodoxin/putidaredoxin family. Requires [2Fe-2S] cluster as cofactor.

Functionally, ferredoxin are iron-sulfur proteins that transfer electrons in a wide variety of metabolic reactions. The sequence is that of 2Fe-2S ferredoxin (fdx) from Buchnera aphidicola subsp. Acyrthosiphon pisum (strain APS) (Acyrthosiphon pisum symbiotic bacterium).